Consider the following 401-residue polypeptide: Lsg locus putative protein 1 (401 aa).

Helical transmembrane passes span 8–28, 36–56, 87–107, 132–152, 162–182, 199–219, 237–257, 282–302, 320–340, 352–372, and 374–394; these read VIYL…LPYL, GYGS…VVSL, IIGS…LFYA, SYAF…VALL, KRIL…YFLY, ALFY…SFFL, LGLY…IQAL, WALF…IIPE, FILF…VNYL, CSVL…FTEI, and YIPY…YFMT.

The protein belongs to the polysaccharide synthase family. HI_0867/HI_1700 subfamily.

The protein localises to the cell membrane. The protein is Lsg locus putative protein 1 of Haemophilus influenzae (strain ATCC 51907 / DSM 11121 / KW20 / Rd).